The following is a 501-amino-acid chain: Probable cytochrome P450 6a20 (501 aa).

Cys-445 lines the heme pocket.

It belongs to the cytochrome P450 family. Heme serves as cofactor.

The protein localises to the endoplasmic reticulum membrane. Its subcellular location is the microsome membrane. Functionally, may be involved in the metabolism of insect hormones and in the breakdown of synthetic insecticides. This chain is Probable cytochrome P450 6a20 (Cyp6a20), found in Drosophila melanogaster (Fruit fly).